Consider the following 178-residue polypeptide: Large ribosomal subunit protein uL5 (178 aa).

A2 is subject to N-acetylalanine. K38 is covalently cross-linked (Glycyl lysine isopeptide (Lys-Gly) (interchain with G-Cter in SUMO2)). Phosphothreonine occurs at positions 44 and 47. Residue K52 is modified to N6-acetyllysine; alternate. A Glycyl lysine isopeptide (Lys-Gly) (interchain with G-Cter in SUMO2); alternate cross-link involves residue K52. K85 carries the post-translational modification N6-acetyllysine. K154 participates in a covalent cross-link: Glycyl lysine isopeptide (Lys-Gly) (interchain with G-Cter in SUMO2).

The protein belongs to the universal ribosomal protein uL5 family. As to quaternary structure, component of the large ribosomal subunit (LSU). Part of the 5S RNP complex, which is a LSU subcomplex composed of the 5S RNA, RPL5 and RPL11. Component of a hexameric 5S RNP precursor complex, composed of 5S RNA, RRS1, RPF2/BXDC1, RPL5, RPL11 and HEATR3; this complex acts as a precursor for ribosome assembly. Interacts with PML. Interacts with MDM2 (via its RanBP2-type zinc finger domain); negatively regulates MDM2-mediated TP53 ubiquitination and degradation. Interacts with NOP53; retains RPL11 into the nucleolus.

The protein resides in the nucleus. The protein localises to the nucleolus. It is found in the cytoplasm. Functionally, component of the ribosome, a large ribonucleoprotein complex responsible for the synthesis of proteins in the cell. The small ribosomal subunit (SSU) binds messenger RNAs (mRNAs) and translates the encoded message by selecting cognate aminoacyl-transfer RNA (tRNA) molecules. The large subunit (LSU) contains the ribosomal catalytic site termed the peptidyl transferase center (PTC), which catalyzes the formation of peptide bonds, thereby polymerizing the amino acids delivered by tRNAs into a polypeptide chain. The nascent polypeptides leave the ribosome through a tunnel in the LSU and interact with protein factors that function in enzymatic processing, targeting, and the membrane insertion of nascent chains at the exit of the ribosomal tunnel. As part of the 5S RNP/5S ribonucleoprotein particle it is an essential component of the LSU, required for its formation and the maturation of rRNAs. It also couples ribosome biogenesis to p53/TP53 activation. As part of the 5S RNP it accumulates in the nucleoplasm and inhibits MDM2, when ribosome biogenesis is perturbed, mediating the stabilization and the activation of TP53. Promotes nucleolar location of PML. The polypeptide is Large ribosomal subunit protein uL5 (RPL11) (Oryctolagus cuniculus (Rabbit)).